Consider the following 178-residue polypeptide: Ribosome rescue factor SmrB (178 aa).

The 76-residue stretch at 99 to 174 (LDLHGLTQMQ…GNAALLILIE (76 aa)) folds into the Smr domain.

The protein belongs to the SmrB family. As to quaternary structure, associates with collided ribosomes, but not with correctly translating polysomes.

Its function is as follows. Acts as a ribosome collision sensor. Detects stalled/collided disomes (pairs of ribosomes where the leading ribosome is stalled and a second ribosome has collided with it) and endonucleolytically cleaves mRNA at the 5' boundary of the stalled ribosome. Stalled/collided disomes form a new interface (primarily via the 30S subunits) that binds SmrB. Cleaved mRNA becomes available for tmRNA ligation, leading to ribosomal subunit dissociation and rescue of stalled ribosomes. The sequence is that of Ribosome rescue factor SmrB from Photorhabdus laumondii subsp. laumondii (strain DSM 15139 / CIP 105565 / TT01) (Photorhabdus luminescens subsp. laumondii).